The primary structure comprises 132 residues: Small ribosomal subunit protein uS11 (132 aa).

The protein belongs to the universal ribosomal protein uS11 family. Part of the 30S ribosomal subunit. Interacts with proteins S7 and S18. Binds to IF-3.

Located on the platform of the 30S subunit, it bridges several disparate RNA helices of the 16S rRNA. Forms part of the Shine-Dalgarno cleft in the 70S ribosome. The polypeptide is Small ribosomal subunit protein uS11 (Cyanothece sp. (strain PCC 7425 / ATCC 29141)).